The chain runs to 364 residues: Histidinol-phosphate aminotransferase (364 aa).

Residue lysine 225 is modified to N6-(pyridoxal phosphate)lysine.

This sequence belongs to the class-II pyridoxal-phosphate-dependent aminotransferase family. Histidinol-phosphate aminotransferase subfamily. As to quaternary structure, homodimer. It depends on pyridoxal 5'-phosphate as a cofactor.

The catalysed reaction is L-histidinol phosphate + 2-oxoglutarate = 3-(imidazol-4-yl)-2-oxopropyl phosphate + L-glutamate. It participates in amino-acid biosynthesis; L-histidine biosynthesis; L-histidine from 5-phospho-alpha-D-ribose 1-diphosphate: step 7/9. The sequence is that of Histidinol-phosphate aminotransferase from Sulfurovum sp. (strain NBC37-1).